The primary structure comprises 837 residues: Anaphase-promoting complex subunit 4 (837 aa).

Low complexity-rich tracts occupy residues 59 to 81 and 547 to 581; these read NDNN…NDNN and SSSS…NNNN. Disordered regions lie at residues 59–89 and 547–588; these read NDNN…KSNK and SSSS…QSGN.

The protein belongs to the APC4 family. In terms of assembly, the APC/C is composed of at least 13 subunits that stay tightly associated throughout the cell cycle: anapc1, anapc2, anapc3, anapc4, anapc5, anapc6, anapc7, anapc8, anapc10, anapc11, cdc20, cdc26 and cdh1.

The protein resides in the nucleus. Its pathway is protein modification; protein ubiquitination. In terms of biological role, component of the anaphase promoting complex/cyclosome (APC/C), a cell cycle-regulated E3 ubiquitin-protein ligase complex that controls progression through mitosis and the G1 phase of the cell cycle. This is Anaphase-promoting complex subunit 4 (anapc4) from Dictyostelium discoideum (Social amoeba).